A 227-amino-acid chain; its full sequence is Cytochrome c oxidase subunit 2 (227 aa).

At 1 to 14 the chain is on the mitochondrial intermembrane side; sequence MAYPMQLGLQDATS. A helical membrane pass occupies residues 15 to 45; it reads PIMEELMNFHDHTLMIVFLISSLVLYLISLM. Residues 46-59 are Mitochondrial matrix-facing; sequence LTTKLIHTNTMDAQ. A helical membrane pass occupies residues 60 to 87; the sequence is EVETIWTILPAIILVLIALPSLRILYMM. Residues 88 to 227 lie on the Mitochondrial intermembrane side of the membrane; the sequence is DEINNPVLTV…FFENWSSSMT (140 aa). His161, Cys196, Glu198, Cys200, His204, and Met207 together coordinate Cu cation. Residue Glu198 participates in Mg(2+) binding.

It belongs to the cytochrome c oxidase subunit 2 family. As to quaternary structure, component of the cytochrome c oxidase (complex IV, CIV), a multisubunit enzyme composed of 14 subunits. The complex is composed of a catalytic core of 3 subunits MT-CO1, MT-CO2 and MT-CO3, encoded in the mitochondrial DNA, and 11 supernumerary subunits COX4I, COX5A, COX5B, COX6A, COX6B, COX6C, COX7A, COX7B, COX7C, COX8 and NDUFA4, which are encoded in the nuclear genome. The complex exists as a monomer or a dimer and forms supercomplexes (SCs) in the inner mitochondrial membrane with NADH-ubiquinone oxidoreductase (complex I, CI) and ubiquinol-cytochrome c oxidoreductase (cytochrome b-c1 complex, complex III, CIII), resulting in different assemblies (supercomplex SCI(1)III(2)IV(1) and megacomplex MCI(2)III(2)IV(2)). Found in a complex with TMEM177, COA6, COX18, COX20, SCO1 and SCO2. Interacts with TMEM177 in a COX20-dependent manner. Interacts with COX20. Interacts with COX16. The cofactor is Cu cation.

The protein localises to the mitochondrion inner membrane. The enzyme catalyses 4 Fe(II)-[cytochrome c] + O2 + 8 H(+)(in) = 4 Fe(III)-[cytochrome c] + 2 H2O + 4 H(+)(out). In terms of biological role, component of the cytochrome c oxidase, the last enzyme in the mitochondrial electron transport chain which drives oxidative phosphorylation. The respiratory chain contains 3 multisubunit complexes succinate dehydrogenase (complex II, CII), ubiquinol-cytochrome c oxidoreductase (cytochrome b-c1 complex, complex III, CIII) and cytochrome c oxidase (complex IV, CIV), that cooperate to transfer electrons derived from NADH and succinate to molecular oxygen, creating an electrochemical gradient over the inner membrane that drives transmembrane transport and the ATP synthase. Cytochrome c oxidase is the component of the respiratory chain that catalyzes the reduction of oxygen to water. Electrons originating from reduced cytochrome c in the intermembrane space (IMS) are transferred via the dinuclear copper A center (CU(A)) of subunit 2 and heme A of subunit 1 to the active site in subunit 1, a binuclear center (BNC) formed by heme A3 and copper B (CU(B)). The BNC reduces molecular oxygen to 2 water molecules using 4 electrons from cytochrome c in the IMS and 4 protons from the mitochondrial matrix. The protein is Cytochrome c oxidase subunit 2 (MT-CO2) of Desmodillus auricularis (Cape short-eared gerbil).